Reading from the N-terminus, the 119-residue chain is Fluoride-specific ion channel FluC (119 aa).

4 helical membrane-spanning segments follow: residues 5–25 (ILPL…LNLA), 30–50 (LSPA…IGIF), 59–79 (WKLL…GFSL), and 92–112 (SALA…WLGL). Na(+) is bound by residues Gly-69 and Thr-72.

Belongs to the fluoride channel Fluc/FEX (TC 1.A.43) family.

The protein resides in the cell inner membrane. It catalyses the reaction fluoride(in) = fluoride(out). Its activity is regulated as follows. Na(+) is not transported, but it plays an essential structural role and its presence is essential for fluoride channel function. Functionally, fluoride-specific ion channel. Important for reducing fluoride concentration in the cell, thus reducing its toxicity. In Neisseria gonorrhoeae (strain NCCP11945), this protein is Fluoride-specific ion channel FluC.